Reading from the N-terminus, the 440-residue chain is Xylose isomerase (440 aa).

Residues His99 and Asp102 contribute to the active site. Glu230, Glu266, His269, Asp294, Asp305, Asp307, and Asp337 together coordinate Mg(2+).

The protein belongs to the xylose isomerase family. In terms of assembly, homotetramer. Requires Mg(2+) as cofactor.

The protein localises to the cytoplasm. It catalyses the reaction alpha-D-xylose = alpha-D-xylulofuranose. The chain is Xylose isomerase from Halalkalibacterium halodurans (strain ATCC BAA-125 / DSM 18197 / FERM 7344 / JCM 9153 / C-125) (Bacillus halodurans).